A 641-amino-acid polypeptide reads, in one-letter code: Homeobox protein ceh-38 (641 aa).

Composition is skewed to polar residues over residues 1–14 (MESS…TNGT) and 28–38 (DPSSTFINNTG). 2 disordered regions span residues 1 to 79 (MESS…TSSA) and 129 to 244 (LHVD…GDRM). Residues 52–79 (TISPHPITPSASTSSATSATEEPATSSA) are compositionally biased toward low complexity. A compositionally biased stretch (basic and acidic residues) spans 131-140 (VDSRRRESHD). Composition is skewed to polar residues over residues 167-183 (TPTN…SSLL) and 190-204 (NTIG…TFGS). The segment at residues 308 to 394 (NAEIGDDIYI…TRLAILDMKT (87 aa)) is a DNA-binding region (CUT). Disordered stretches follow at residues 398 to 428 (NRAS…PVSK), 485 to 508 (GGNI…VGDT), and 552 to 641 (FGVS…LAAN). Positions 427–486 (SKRPRLVFTDIQKRTLQAIFKETQRPSREMQQTIAEHLRLDLSTVANFFMNARRRSRLGG) form a DNA-binding region, homeobox. Residues 571-604 (HEDDEELDELNDSELAYEEDVEIGDEEEEDEEQA) show a composition bias toward acidic residues. The segment covering 613–626 (KVEELEEKTVIKEE) has biased composition (basic and acidic residues).

This sequence belongs to the CUT homeobox family. In terms of tissue distribution, expressed in the embryo. After gastrulation, expressed in almost all cells. During larval and adult stages, expressed in the dorsal and ventral nerve cord, head and tail neurons, pharynx, gut and head.

It localises to the nucleus. Its function is as follows. Probable DNA-binding regulatory protein involved in cell-fate specification. This chain is Homeobox protein ceh-38 (ceh-38), found in Caenorhabditis elegans.